A 335-amino-acid polypeptide reads, in one-letter code: NADH-quinone oxidoreductase subunit H (335 aa).

Helical transmembrane passes span 11–31, 81–101, 114–134, 154–174, 187–207, 238–258, 270–290, and 307–327; these read VILT…CGAL, MIFT…FVVI, IGLL…LFAG, VSYE…VGSF, LWFI…GVAV, FFVG…TLFF, QVPF…FILL, and WKFC…VVLY.

Belongs to the complex I subunit 1 family. NDH-1 is composed of 13 different subunits. Subunits NuoA, H, J, K, L, M, N constitute the membrane sector of the complex.

It is found in the cell inner membrane. It catalyses the reaction a quinone + NADH + 5 H(+)(in) = a quinol + NAD(+) + 4 H(+)(out). Its function is as follows. NDH-1 shuttles electrons from NADH, via FMN and iron-sulfur (Fe-S) centers, to quinones in the respiratory chain. The immediate electron acceptor for the enzyme in this species is believed to be ubiquinone. Couples the redox reaction to proton translocation (for every two electrons transferred, four hydrogen ions are translocated across the cytoplasmic membrane), and thus conserves the redox energy in a proton gradient. This subunit may bind ubiquinone. The polypeptide is NADH-quinone oxidoreductase subunit H (Pseudomonas entomophila (strain L48)).